The chain runs to 236 residues: Purine nucleoside phosphorylase DeoD-type 2 (236 aa).

Histidine 5 is a binding site for a purine D-ribonucleoside. Residues glycine 21, arginine 25, arginine 44, and 88 to 91 contribute to the phosphate site; that span reads RVGS. A purine D-ribonucleoside-binding positions include 180–182 and 204–205; these read DME and SD. Aspartate 205 (proton donor) is an active-site residue.

It belongs to the PNP/UDP phosphorylase family. Homohexamer; trimer of homodimers.

The catalysed reaction is a purine D-ribonucleoside + phosphate = a purine nucleobase + alpha-D-ribose 1-phosphate. It carries out the reaction a purine 2'-deoxy-D-ribonucleoside + phosphate = a purine nucleobase + 2-deoxy-alpha-D-ribose 1-phosphate. In terms of biological role, catalyzes the reversible phosphorolytic breakdown of the N-glycosidic bond in the beta-(deoxy)ribonucleoside molecules, with the formation of the corresponding free purine bases and pentose-1-phosphate. The sequence is that of Purine nucleoside phosphorylase DeoD-type 2 from Vibrio vulnificus (strain CMCP6).